Consider the following 286-residue polypeptide: Aldo-keto reductase MAP_4149 (286 aa).

Residue tyrosine 61 is the Proton donor of the active site. The NADPH site is built by leucine 201, valine 203, valine 239, arginine 241, serine 242, arginine 247, and asparagine 251.

It belongs to the aldo/keto reductase family.

The sequence is that of Aldo-keto reductase MAP_4149 from Mycolicibacterium paratuberculosis (strain ATCC BAA-968 / K-10) (Mycobacterium paratuberculosis).